The following is a 218-amino-acid chain: Octanoyltransferase (218 aa).

One can recognise a BPL/LPL catalytic domain in the interval 27 to 210; that stretch reads TGGEDTLYLV…QFLAIFTHPA (184 aa). Substrate contacts are provided by residues 72–79, 139–141, and 152–154; these read RGGNITCH, SIG, and GLA. Cys170 serves as the catalytic Acyl-thioester intermediate.

This sequence belongs to the LipB family.

It is found in the cytoplasm. It carries out the reaction octanoyl-[ACP] + L-lysyl-[protein] = N(6)-octanoyl-L-lysyl-[protein] + holo-[ACP] + H(+). The protein operates within protein modification; protein lipoylation via endogenous pathway; protein N(6)-(lipoyl)lysine from octanoyl-[acyl-carrier-protein]: step 1/2. In terms of biological role, catalyzes the transfer of endogenously produced octanoic acid from octanoyl-acyl-carrier-protein onto the lipoyl domains of lipoate-dependent enzymes. Lipoyl-ACP can also act as a substrate although octanoyl-ACP is likely to be the physiological substrate. The chain is Octanoyltransferase from Nitratidesulfovibrio vulgaris (strain ATCC 29579 / DSM 644 / CCUG 34227 / NCIMB 8303 / VKM B-1760 / Hildenborough) (Desulfovibrio vulgaris).